An 837-amino-acid polypeptide reads, in one-letter code: Katanin p80 WD40 repeat-containing subunit B1 homolog KTN80.4 (837 aa).

WD repeat units lie at residues 14-54, 57-96, 99-138, 141-182, 184-222, 225-265, and 267-304; these read AHSA…AILS, GHSS…IVRT, GHRS…CIHT, GHTR…TEFK, HEGQ…LIGS, PETA…DGVD, and GWSR…TEPC. Positions 115–131 match the DWD box motif; sequence FFASGSLDTNLKIWDIR. Disordered regions lie at residues 307-328, 358-462, and 501-614; these read GDTA…DPVV, GRLS…ANPV, and LQAA…LVIN. 2 stretches are compositionally biased toward polar residues: residues 376-387 and 412-450; these read IGRSSTSQNSES and TFSS…TSRR. A compositionally biased stretch (low complexity) spans 509–520; it reads SPSSRNNPDLPD. 2 stretches are compositionally biased toward basic and acidic residues: residues 553–563 and 580–595; these read ATERSINDFRY and RNHD…RSNR.

This sequence belongs to the WD repeat KATNB1 family. Component of KTN80-KTN1 complexes composed of a hexamer of KTN1-KTN80 heterodimers that sense microtubule (MT) geometry to confer precise MT severing. Interacts directly with AAA1/KTN1, and weakly with KTN80.1 and KTN80.3. In terms of tissue distribution, expressed in siliques, flowers, leaves, stems and roots.

It is found in the cytoplasm. It localises to the cytoskeleton. May participate in a complex which severs microtubules in an ATP-dependent manner. This activity may promote rapid reorganization of cellular microtubule arrays. Confers precision to microtubule (MT) severing by specific targeting of KTN1 to MT cleavage sites such as crossover or branching nucleation sites. Together with other KTN80s, regulates cell elongation by modulating MT organization. The protein is Katanin p80 WD40 repeat-containing subunit B1 homolog KTN80.4 of Arabidopsis thaliana (Mouse-ear cress).